The sequence spans 132 residues: uncharacterized protein (132 aa).

To M.jannaschii MJ0661.

This is an uncharacterized protein from Helicobacter pylori (strain ATCC 700392 / 26695) (Campylobacter pylori).